Consider the following 341-residue polypeptide: Methionine import ATP-binding protein MetN 2 (341 aa).

In terms of domain architecture, ABC transporter spans 2 to 241 (IKLNQIVKRY…PQHEVTKRFV (240 aa)). An ATP-binding site is contributed by 38 to 45 (GFSGAGKS).

The protein belongs to the ABC transporter superfamily. Methionine importer (TC 3.A.1.24) family. The complex is composed of two ATP-binding proteins (MetN), two transmembrane proteins (MetI) and a solute-binding protein (MetQ).

Its subcellular location is the cell membrane. It catalyses the reaction L-methionine(out) + ATP + H2O = L-methionine(in) + ADP + phosphate + H(+). It carries out the reaction D-methionine(out) + ATP + H2O = D-methionine(in) + ADP + phosphate + H(+). Part of the ABC transporter complex MetNIQ involved in methionine import. Responsible for energy coupling to the transport system. The protein is Methionine import ATP-binding protein MetN 2 of Staphylococcus epidermidis (strain ATCC 35984 / DSM 28319 / BCRC 17069 / CCUG 31568 / BM 3577 / RP62A).